The primary structure comprises 388 residues: Alanine racemase 2 (388 aa).

Catalysis depends on lysine 39, which acts as the Proton acceptor; specific for D-alanine. Lysine 39 bears the N6-(pyridoxal phosphate)lysine mark. Substrate is bound at residue arginine 137. The Proton acceptor; specific for L-alanine role is filled by tyrosine 267. Residue methionine 315 coordinates substrate.

It belongs to the alanine racemase family. Requires pyridoxal 5'-phosphate as cofactor.

It catalyses the reaction L-alanine = D-alanine. It functions in the pathway amino-acid biosynthesis; D-alanine biosynthesis; D-alanine from L-alanine: step 1/1. In terms of biological role, catalyzes the interconversion of L-alanine and D-alanine. May also act on other amino acids. This is Alanine racemase 2 (alr2) from Caldanaerobacter subterraneus subsp. tengcongensis (strain DSM 15242 / JCM 11007 / NBRC 100824 / MB4) (Thermoanaerobacter tengcongensis).